The sequence spans 335 residues: UPF0353 protein NFA_34780 (335 aa).

2 helical membrane passes run 8 to 28 and 61 to 81; these read ALIW…YVLV and IALM…PTSV. A VWFA domain is found at 90–295; it reads TVVLVMDVSL…EELTAVYDTL (206 aa). The chain crosses the membrane as a helical span at residues 310 to 330; it reads RPWLLLGMLVVAAGIVTGLLY.

It belongs to the UPF0353 family.

It is found in the cell membrane. This is UPF0353 protein NFA_34780 from Nocardia farcinica (strain IFM 10152).